The sequence spans 71 residues: MPKYWSYPVGLAVEINNNARYGCPHHVGRKGKIIEHLHSATYDYAVSDETGDITYFKEHELTPLKGGLAYV.

This chain is SPbeta prophage-derived uncharacterized protein YorP (yorP), found in Bacillus subtilis (strain 168).